The following is a 426-amino-acid chain: Serine--tRNA ligase (426 aa).

An L-serine-binding site is contributed by 233-235; that stretch reads TAE. 264-266 is a binding site for ATP; that stretch reads RSE. Glutamate 287 is a binding site for L-serine. 351 to 354 provides a ligand contact to ATP; that stretch reads EISS. Serine 387 is a binding site for L-serine.

It belongs to the class-II aminoacyl-tRNA synthetase family. Type-1 seryl-tRNA synthetase subfamily. As to quaternary structure, homodimer. The tRNA molecule binds across the dimer.

Its subcellular location is the cytoplasm. It carries out the reaction tRNA(Ser) + L-serine + ATP = L-seryl-tRNA(Ser) + AMP + diphosphate + H(+). The catalysed reaction is tRNA(Sec) + L-serine + ATP = L-seryl-tRNA(Sec) + AMP + diphosphate + H(+). The protein operates within aminoacyl-tRNA biosynthesis; selenocysteinyl-tRNA(Sec) biosynthesis; L-seryl-tRNA(Sec) from L-serine and tRNA(Sec): step 1/1. Functionally, catalyzes the attachment of serine to tRNA(Ser). Is also able to aminoacylate tRNA(Sec) with serine, to form the misacylated tRNA L-seryl-tRNA(Sec), which will be further converted into selenocysteinyl-tRNA(Sec). The chain is Serine--tRNA ligase from Pseudomonas fluorescens (strain Pf0-1).